Here is a 513-residue protein sequence, read N- to C-terminus: NAD(P)H-quinone oxidoreductase subunit 2 (513 aa).

The next 14 helical transmembrane spans lie at 12 to 32 (TLWP…VDLI), 41 to 61 (LPYL…PMWI), 77 to 97 (LSVV…LMSV), 104 to 124 (SLAT…AMLL), 130 to 150 (MAMI…LSGY), 165 to 185 (LLIG…LYGF), 199 to 219 (IVNL…GICF), 238 to 258 (PTPV…ALAI), 272 to 292 (WQTL…VVAI), 300 to 320 (MLAY…AIGT), 328 to 348 (ILYI…VVLF), 372 to 392 (LVLS…GFFG), 394 to 414 (LYLF…FGLV), and 456 to 476 (AGML…PPLI). The span at 494–505 (TATPVSRVSTGA) shows a compositional bias: polar residues. The tract at residues 494 to 513 (TATPVSRVSTGAQAPADHGR) is disordered.

Belongs to the complex I subunit 2 family. NDH-1 can be composed of about 15 different subunits; different subcomplexes with different compositions have been identified which probably have different functions.

It is found in the cell inner membrane. The catalysed reaction is a plastoquinone + NADH + (n+1) H(+)(in) = a plastoquinol + NAD(+) + n H(+)(out). The enzyme catalyses a plastoquinone + NADPH + (n+1) H(+)(in) = a plastoquinol + NADP(+) + n H(+)(out). Its function is as follows. NDH-1 shuttles electrons from an unknown electron donor, via FMN and iron-sulfur (Fe-S) centers, to quinones in the respiratory and/or the photosynthetic chain. The immediate electron acceptor for the enzyme in this species is believed to be plastoquinone. Couples the redox reaction to proton translocation, and thus conserves the redox energy in a proton gradient. Cyanobacterial NDH-1 also plays a role in inorganic carbon-concentration. The protein is NAD(P)H-quinone oxidoreductase subunit 2 of Gloeobacter violaceus (strain ATCC 29082 / PCC 7421).